Here is a 278-residue protein sequence, read N- to C-terminus: Deoxyuridine 5'-triphosphate nucleotidohydrolase (278 aa).

Substrate is bound by residues 171-173 (RSG) and 273-274 (FG).

It belongs to the dUTPase family. Mg(2+) serves as cofactor.

The catalysed reaction is dUTP + H2O = dUMP + diphosphate + H(+). Its function is as follows. Involved in nucleotide metabolism: produces dUMP, the immediate precursor of thymidine nucleotides and decreases the intracellular concentration of dUTP to avoid uracil incorporation into viral DNA. In Homo sapiens (Human), this protein is Deoxyuridine 5'-triphosphate nucleotidohydrolase.